A 166-amino-acid polypeptide reads, in one-letter code: Deglycase PYRAB04690 (166 aa).

The 166-residue stretch at 1–166 (MRVLILSADQ…WMREFVKLLK (166 aa)) folds into the PfpI endopeptidase domain. The active site involves histidine 101.

This sequence belongs to the peptidase C56 family. In terms of assembly, homohexamer formed by a dimer of trimers that assemble into a hollow ring structure.

The protein localises to the cytoplasm. The enzyme catalyses N(omega)-(1-hydroxy-2-oxopropyl)-L-arginyl-[protein] + H2O = lactate + L-arginyl-[protein] + H(+). It catalyses the reaction N(6)-(1-hydroxy-2-oxopropyl)-L-lysyl-[protein] + H2O = lactate + L-lysyl-[protein] + H(+). It carries out the reaction S-(1-hydroxy-2-oxopropyl)-L-cysteinyl-[protein] + H2O = lactate + L-cysteinyl-[protein] + H(+). The catalysed reaction is N(omega)-(1-hydroxy-2-oxoethyl)-L-arginyl-[protein] + H2O = L-arginyl-[protein] + glycolate + H(+). The enzyme catalyses N(6)-(1-hydroxy-2-oxoethyl)-L-lysyl-[protein] + H2O = glycolate + L-lysyl-[protein] + H(+). It catalyses the reaction S-(1-hydroxy-2-oxoethyl)-L-cysteinyl-[protein] + H2O = glycolate + L-cysteinyl-[protein] + H(+). Its function is as follows. Deglycase that catalyzes the deglycation of the Maillard adducts formed between amino groups of proteins and reactive carbonyl groups of glyoxals. Thus, functions as a protein deglycase that repairs methylglyoxal- and glyoxal-glycated proteins, and releases repaired proteins and lactate or glycolate, respectively. Deglycates cysteine, arginine and lysine residues in proteins, and thus reactivates these proteins by reversing glycation by glyoxals. Acts on early glycation intermediates (hemithioacetals and aminocarbinols), preventing the formation of advanced glycation endproducts (AGE) that cause irreversible damage. Also displays proteolytic activity. This chain is Deglycase PYRAB04690, found in Pyrococcus abyssi (strain GE5 / Orsay).